A 279-amino-acid chain; its full sequence is NH(3)-dependent NAD(+) synthetase (279 aa).

An ATP-binding site is contributed by 39–46 (GLSGGIDS). Asp-45 provides a ligand contact to Mg(2+). Arg-122 is a binding site for deamido-NAD(+). Thr-142 contributes to the ATP binding site. Glu-147 provides a ligand contact to Mg(2+). Deamido-NAD(+) is bound by residues Lys-155 and Asp-162. Residues Lys-171 and Ser-193 each contribute to the ATP site. Position 253 to 254 (253 to 254 (HK)) interacts with deamido-NAD(+).

The protein belongs to the NAD synthetase family. As to quaternary structure, homodimer.

It carries out the reaction deamido-NAD(+) + NH4(+) + ATP = AMP + diphosphate + NAD(+) + H(+). It participates in cofactor biosynthesis; NAD(+) biosynthesis; NAD(+) from deamido-NAD(+) (ammonia route): step 1/1. Functionally, catalyzes the ATP-dependent amidation of deamido-NAD to form NAD. Uses ammonia as a nitrogen source. This is NH(3)-dependent NAD(+) synthetase from Sulfolobus acidocaldarius (strain ATCC 33909 / DSM 639 / JCM 8929 / NBRC 15157 / NCIMB 11770).